Here is a 369-residue protein sequence, read N- to C-terminus: NADH-quinone oxidoreductase subunit H (369 aa).

8 consecutive transmembrane segments (helical) span residues valine 20–valine 40, isoleucine 88–isoleucine 108, isoleucine 133–glycine 153, isoleucine 179–valine 199, methionine 205–leucine 225, isoleucine 267–isoleucine 287, isoleucine 293–isoleucine 313, and leucine 328–leucine 348.

This sequence belongs to the complex I subunit 1 family. As to quaternary structure, NDH-1 is composed of 14 different subunits. Subunits NuoA, H, J, K, L, M, N constitute the membrane sector of the complex.

The protein resides in the cell inner membrane. The enzyme catalyses a quinone + NADH + 5 H(+)(in) = a quinol + NAD(+) + 4 H(+)(out). NDH-1 shuttles electrons from NADH, via FMN and iron-sulfur (Fe-S) centers, to quinones in the respiratory chain. The immediate electron acceptor for the enzyme in this species is believed to be ubiquinone. Couples the redox reaction to proton translocation (for every two electrons transferred, four hydrogen ions are translocated across the cytoplasmic membrane), and thus conserves the redox energy in a proton gradient. This subunit may bind ubiquinone. This chain is NADH-quinone oxidoreductase subunit H, found in Ehrlichia canis (strain Jake).